A 217-amino-acid polypeptide reads, in one-letter code: KS1 protein (217 aa).

A signal peptide spans 1–16 (MKLIIVLVMMLVCVYS). The segment covering 24–47 (PKNHEVPAKKQFAETKVEKKKRSD) has biased composition (basic and acidic residues). Disordered stretches follow at residues 24 to 58 (PKNH…DDDD) and 72 to 205 (EDDD…LKIK). 2 repeat units span residues 32 to 81 (KKQF…VDGG) and 98 to 147 (KKKK…YDED). Residues 32-147 (KKQFAETKVE…EEDDDCYDED (116 aa)) form a 2 X 50 AA approximate repeats region. Composition is skewed to acidic residues over residues 48–58 (DGDEEICDDDD) and 72–94 (EDDD…DDCQ). Positions 98 to 110 (KKKKRETKPKLKK) are enriched in basic residues. Over residues 114–145 (DEEEEECEEDDEDCEVEVDIEECDEEDDDCYD) the composition is skewed to acidic residues. Residues 149 to 188 (KKKKENKLKKESKKKNSKKTVPKNAKKSSKRSTSTKKTSQ) are compositionally biased toward basic residues.

In terms of tissue distribution, expressed in tentacle-specific epithelial cells (battery cells) as well as in a small fraction of ectodermal epithelial cells in the gastric region subjacent to the tentacles (the tentacle formation region). The later cells are committed to become battery cells.

Responds to early signals of head formation in hydra. This is KS1 protein (KS1) from Hydra vulgaris (Hydra).